Consider the following 690-residue polypeptide: Signal peptide peptidase-like 2C (690 aa).

The first 28 residues, 1–28 (MACLGSLHPLGSLLLLFLLLLLSPEARG), serve as a signal peptide directing secretion. The Lumenal portion of the chain corresponds to 29 to 192 (EYGLVRVVSK…APLEPVTDYN (164 aa)). Positions 87-166 (DSSPRQRPLH…AVLRYTDMLD (80 aa)) constitute a PA domain. N-linked (GlcNAc...) asparagine glycosylation is present at Asn106. The chain crosses the membrane as a helical span at residues 193–213 (MAIIFILAVGTVAAGGYWAGL). Over 214-260 (MEANKLQRRQAQRGGGLGGHNQQQTVAAERSQRAWEDDDFEDAPMDF) the chain is Cytoplasmic. Residues 261–283 (TPAMTGAVVTMSCSIMILLYFFY) form a helical membrane-spanning segment. Position 284 (Asp284) is a topological domain, lumenal. The helical transmembrane segment at 285–307 (CFVYVMIGIFSLGASTGLYSCLA) threads the bilayer. The Cytoplasmic portion of the chain corresponds to 308-328 (PILCHLPLWRYQWVLPGQRVS). A helical membrane pass occupies residues 329-349 (VTWPLLLLAGLCAMVTVLWVI). Residues 350–354 (HRNED) are Lumenal-facing. The chain crosses the membrane as a helical span at residues 355 to 373 (HWAWLLQDTLGVAYCLFVL). The Cytoplasmic segment spans residues 374–384 (RRVRLPTFKNC). Residues 385 to 405 (TLFLLALLAFDVFFVFITPLF) traverse the membrane as a helical segment. Residue Asp395 is part of the active site. Topologically, residues 406 to 448 (TKTGESIMVEVASGPADSSSHERLPMVLKVPRLSFSALTLCNQ) are lumenal. Residues 449-469 (PFSILGFGDIVVPGFLVAYCH) form a helical membrane-spanning segment. Asp457 is an active-site residue. Over 470-482 (RFDMQVQSRQVYY) the chain is Cytoplasmic. The helical transmembrane segment at 483–503 (MACTVAYAVGLLVTFVAMILM) threads the bilayer. Gln504 is a topological domain (lumenal). A helical membrane pass occupies residues 505-525 (MGQPALLYLVSSTLLTSLAVA). The short motif at 508–510 (PAL) is the PAL element. Residues 526–690 (TCRQEFTLFW…KKSMSAQAPL (165 aa)) are Cytoplasmic-facing. The segment covering 564 to 573 (EDAKDSRTTN) has biased composition (basic and acidic residues). The tract at residues 564–633 (EDAKDSRTTN…DPNELPSGSP (70 aa)) is disordered. The span at 615 to 624 (SEGWSDTNLD) shows a compositional bias: polar residues.

The protein belongs to the peptidase A22B family. Interacts (via active sites) with FREY; the interaction stabilizes FREY1 protein and inhibits SPPL2C proteolytic activity. In terms of processing, glycosylated. In terms of tissue distribution, highly expressed in testis where it is primarily localised in spermatids (at protein level).

It localises to the endoplasmic reticulum membrane. In terms of biological role, sperm-specific intramembrane-cleaving aspartic protease (I-CLiP) that cleaves distinct tail-anchored proteins and SNARE proteins. In elongated spermatids, modulates intracellular Ca(2+) homeostasis by controlling PLN abundance through proteolytic cleavage. During spermatogenesis, processes SNARE proteins and impacts vesicular trafficking which supports compartmental reorganization in maturating spermatids and may play a role in formation of the acrosome. In round spermatids, acts as a scaffold protein supporting FREY1 in IZUMO1 recruitment at the endoplasmic reticulum membrane and coordination of IZUMO1 complex assembly. Stabilizes FREY1 at the endoplasmic reticulum membrane through interaction. May recruit IZUMO1 interaction partners. Its function is as follows. No difference in cleavage specificity compared to isoform 1. This is Signal peptide peptidase-like 2C from Mus musculus (Mouse).